We begin with the raw amino-acid sequence, 133 residues long: MAKLETVTLGNIGKDGKQTLVLNPRGVNPTNGVASLSQAGAVPALEKRVTVSVSQPSRNRKNYKVQVKIQNPTACTANGSCDPSVTRQAYADVTFSFTQYSTDEERAFVRTELAALLASPLLIDAIDQLNPAY.

It belongs to the Leviviricetes capsid protein family. In terms of assembly, homodimer. The homodimers binds to the viral RNA via an operator hairpin, but also to many other RNA sequences in the viral genome; this interaction probably shifts the virus from the replicative to the assembly phase and ensures specific encapsidation of the viral genome. Interacts with the maturation protein A2.

The protein resides in the virion. Capsid protein self-assembles to form an icosahedral capsid with a T=3 symmetry, about 26 nm in diameter, and consisting of 89 capsid proteins dimers (178 capsid proteins). Involved in viral genome encapsidation through the interaction between a capsid protein dimer and the multiple packaging signals present in the RNA genome. Binding of the capsid proteins to the viral RNA induces a conformational change required for efficient T=3 shell formation. The capsid also contains 1 copy of the A2 maturation protein. In terms of biological role, acts as a translational repressor of viral replicase synthesis late in infection. This latter function is the result of capsid protein interaction with an RNA hairpin which contains the replicase ribosome-binding site. This is Capsid protein from Escherichia virus Qbeta (Bacteriophage Q-beta).